Here is a 220-residue protein sequence, read N- to C-terminus: Orotate phosphoribosyltransferase (220 aa).

Residue Lys26 participates in 5-phospho-alpha-D-ribose 1-diphosphate binding. 34-35 is an orotate binding site; that stretch reads FF. 5-phospho-alpha-D-ribose 1-diphosphate is bound by residues 72 to 73, Arg101, Lys102, Lys105, His107, and 126 to 134; these read YK and DDVITAGTS. Residues Thr130 and Arg158 each contribute to the orotate site.

This sequence belongs to the purine/pyrimidine phosphoribosyltransferase family. PyrE subfamily. As to quaternary structure, homodimer. Mg(2+) is required as a cofactor.

It catalyses the reaction orotidine 5'-phosphate + diphosphate = orotate + 5-phospho-alpha-D-ribose 1-diphosphate. The protein operates within pyrimidine metabolism; UMP biosynthesis via de novo pathway; UMP from orotate: step 1/2. In terms of biological role, catalyzes the transfer of a ribosyl phosphate group from 5-phosphoribose 1-diphosphate to orotate, leading to the formation of orotidine monophosphate (OMP). The polypeptide is Orotate phosphoribosyltransferase (Bordetella avium (strain 197N)).